The primary structure comprises 510 residues: Histidine ammonia-lyase (510 aa).

A cross-link (5-imidazolinone (Ala-Gly)) is located at residues 143–145; sequence ASG. S144 is modified (2,3-didehydroalanine (Ser)).

It belongs to the PAL/histidase family. Post-translationally, contains an active site 4-methylidene-imidazol-5-one (MIO), which is formed autocatalytically by cyclization and dehydration of residues Ala-Ser-Gly.

The protein localises to the cytoplasm. The catalysed reaction is L-histidine = trans-urocanate + NH4(+). Its pathway is amino-acid degradation; L-histidine degradation into L-glutamate; N-formimidoyl-L-glutamate from L-histidine: step 1/3. The chain is Histidine ammonia-lyase from Pseudomonas putida (strain ATCC 47054 / DSM 6125 / CFBP 8728 / NCIMB 11950 / KT2440).